The primary structure comprises 612 residues: tRNA 5-methylaminomethyl-2-thiouridine biosynthesis bifunctional protein MnmC (612 aa).

A tRNA (mnm(5)s(2)U34)-methyltransferase region spans residues 1-218; that stretch reads MITFRGDGLY…KREILEASLE (218 aa). The FAD-dependent cmnm(5)s(2)U34 oxidoreductase stretch occupies residues 244–612; that stretch reads IGAGVAGLAA…VRKLKRGLVR (369 aa).

In the N-terminal section; belongs to the methyltransferase superfamily. tRNA (mnm(5)s(2)U34)-methyltransferase family. The protein in the C-terminal section; belongs to the DAO family. It depends on FAD as a cofactor.

Its subcellular location is the cytoplasm. It carries out the reaction 5-aminomethyl-2-thiouridine(34) in tRNA + S-adenosyl-L-methionine = 5-methylaminomethyl-2-thiouridine(34) in tRNA + S-adenosyl-L-homocysteine + H(+). Functionally, catalyzes the last two steps in the biosynthesis of 5-methylaminomethyl-2-thiouridine (mnm(5)s(2)U) at the wobble position (U34) in tRNA. Catalyzes the FAD-dependent demodification of cmnm(5)s(2)U34 to nm(5)s(2)U34, followed by the transfer of a methyl group from S-adenosyl-L-methionine to nm(5)s(2)U34, to form mnm(5)s(2)U34. This Campylobacter fetus subsp. fetus (strain 82-40) protein is tRNA 5-methylaminomethyl-2-thiouridine biosynthesis bifunctional protein MnmC.